A 192-amino-acid chain; its full sequence is Peptidyl-tRNA hydrolase (192 aa).

Tyr17 contacts tRNA. The active-site Proton acceptor is the His22. TRNA contacts are provided by Phe68, Asn70, and Asn116.

The protein belongs to the PTH family. In terms of assembly, monomer.

It localises to the cytoplasm. It catalyses the reaction an N-acyl-L-alpha-aminoacyl-tRNA + H2O = an N-acyl-L-amino acid + a tRNA + H(+). Functionally, hydrolyzes ribosome-free peptidyl-tRNAs (with 1 or more amino acids incorporated), which drop off the ribosome during protein synthesis, or as a result of ribosome stalling. Its function is as follows. Catalyzes the release of premature peptidyl moieties from peptidyl-tRNA molecules trapped in stalled 50S ribosomal subunits, and thus maintains levels of free tRNAs and 50S ribosomes. This is Peptidyl-tRNA hydrolase from Xylella fastidiosa (strain M12).